The sequence spans 247 residues: Probable transcriptional regulatory protein TDE_1487 (247 aa).

Belongs to the TACO1 family.

It localises to the cytoplasm. This is Probable transcriptional regulatory protein TDE_1487 from Treponema denticola (strain ATCC 35405 / DSM 14222 / CIP 103919 / JCM 8153 / KCTC 15104).